Here is a 286-residue protein sequence, read N- to C-terminus: tRNA (guanine-N(7)-)-methyltransferase (286 aa).

The disordered stretch occupies residues 1–21 (MTNPESTAIDPVAAMGTDHTE). Positions 91, 116, 143, and 165 each coordinate S-adenosyl-L-methionine. Residue Asp-165 is part of the active site. Substrate is bound by residues Lys-169, Asp-201, and 262–265 (TNFE).

It belongs to the class I-like SAM-binding methyltransferase superfamily. TrmB family.

The catalysed reaction is guanosine(46) in tRNA + S-adenosyl-L-methionine = N(7)-methylguanosine(46) in tRNA + S-adenosyl-L-homocysteine. The protein operates within tRNA modification; N(7)-methylguanine-tRNA biosynthesis. In terms of biological role, catalyzes the formation of N(7)-methylguanine at position 46 (m7G46) in tRNA. This is tRNA (guanine-N(7)-)-methyltransferase from Bifidobacterium longum (strain NCC 2705).